The chain runs to 179 residues: Large ribosomal subunit protein uL5 (179 aa).

Belongs to the universal ribosomal protein uL5 family. As to quaternary structure, part of the 50S ribosomal subunit; part of the 5S rRNA/L5/L18/L25 subcomplex. Contacts the 5S rRNA and the P site tRNA. Forms a bridge to the 30S subunit in the 70S ribosome.

Its function is as follows. This is one of the proteins that bind and probably mediate the attachment of the 5S RNA into the large ribosomal subunit, where it forms part of the central protuberance. In the 70S ribosome it contacts protein S13 of the 30S subunit (bridge B1b), connecting the 2 subunits; this bridge is implicated in subunit movement. Contacts the P site tRNA; the 5S rRNA and some of its associated proteins might help stabilize positioning of ribosome-bound tRNAs. The sequence is that of Large ribosomal subunit protein uL5 from Synechococcus sp. (strain RCC307).